Consider the following 261-residue polypeptide: Probable membrane transporter protein PD_1894 (261 aa).

8 helical membrane passes run Leu-6 to Gly-26, His-45 to Ile-64, Val-78 to Ile-98, Asp-99 to Leu-119, Ala-150 to Ala-170, Thr-175 to Leu-195, Trp-205 to Leu-225, and Val-239 to Leu-259.

This sequence belongs to the 4-toluene sulfonate uptake permease (TSUP) (TC 2.A.102) family.

It localises to the cell membrane. This chain is Probable membrane transporter protein PD_1894, found in Xylella fastidiosa (strain Temecula1 / ATCC 700964).